Here is a 694-residue protein sequence, read N- to C-terminus: MDSKYFATSRNDAVGPSPVKFSFKRKYDAMANSPILEKKPHVAQIKQTIAPILLTSKRTSIEQQQKSLPVFNCRHRILKELEANDTVLIMSETGSGKTTQIPQFLLLAGYAKNGMIGITQPRRVAAITVARRVAQELNGTIGDTVGYTVRFEDVTSRATKIRFLTDGVLLRESIKDRLLLKYSVIILDEAHERTVNADLLFGIVKDAQKERRKQKLANLKVVVTSATMDIDHFGNYFNCKGMYLEGRTYPVRVMHTKEEHEDYIHTVLVTLFHIHRTTPKNHDVLIFLTGQEEIESLAQQIRQLAKIDTTGTTDLRVFTLYAQLSQGKQLECFVPTPANVRKVILATNIAETSITIPGIRCVIDCGFVKEKSFNTVDGLDVLKSVRISKAQAWQRAGRAGRDADGTCYRAYTKAEMDSFADATQPEILRTNPTSMVLQLLALDIDCNNFDFLDPPLEDGLRSAYKSLDALGAIKTGDDSYITPLGRQMVQYPLDPKYSKLLLTASSFGCMEEILSLVSVLSSDHVFVSNSEKNEMAALAHAKFQSKHGDHLTLLNVFNGFLKSEKPKMWCHDNYLNLRSLTYARNVRRQLREISEHLHLALNSSDDIEMLKKCILNGFFENIAVLQRDGFYITASGNIRSKIHPSSVLHGKYKPSYILFTEIVQTEQTFLRQVTEISIEWIKEVVPFVKNIPTR.

The region spanning 78-246 (LKELEANDTV…FNCKGMYLEG (169 aa)) is the Helicase ATP-binding domain. Position 91–98 (91–98 (SETGSGKT)) interacts with ATP. Positions 188–191 (DEAH) match the DEAH box motif. Residues 270–443 (TLFHIHRTTP…SMVLQLLALD (174 aa)) enclose the Helicase C-terminal domain.

It belongs to the DEAD box helicase family. DEAH subfamily.

Its subcellular location is the nucleus. The protein localises to the nucleolus. It carries out the reaction ATP + H2O = ADP + phosphate + H(+). Part of a translational control module, also containing pths/DDX47 and ais/DDX52, which coordinates germline stem cell differentiation with ribosome biogenesis during oogenesis. This module allows for coregulation of ribosomal proteins and non1/GTPBP4, a p53 repressor, preventing p53 stabilization, cell cycle arrest and loss of stem cell differentiation. The protein is ATP-dependent RNA helicase DHX33 of Drosophila melanogaster (Fruit fly).